Here is a 153-residue protein sequence, read N- to C-terminus: 3-hydroxyacyl-[acyl-carrier-protein] dehydratase FabZ (153 aa).

Histidine 54 is an active-site residue.

Belongs to the thioester dehydratase family. FabZ subfamily.

The protein resides in the cytoplasm. The catalysed reaction is a (3R)-hydroxyacyl-[ACP] = a (2E)-enoyl-[ACP] + H2O. In terms of biological role, involved in unsaturated fatty acids biosynthesis. Catalyzes the dehydration of short chain beta-hydroxyacyl-ACPs and long chain saturated and unsaturated beta-hydroxyacyl-ACPs. The protein is 3-hydroxyacyl-[acyl-carrier-protein] dehydratase FabZ of Shewanella denitrificans (strain OS217 / ATCC BAA-1090 / DSM 15013).